Here is a 538-residue protein sequence, read N- to C-terminus: Atos homolog protein B (538 aa).

4 disordered regions span residues 1–103 (MRHV…GLVS), 130–149 (GSAT…PSSN), 163–185 (PDQG…QLHT), and 199–272 (KSPV…LGCP). The segment covering 130 to 148 (GSATSSWTSGTQSTPWPSS) has biased composition (low complexity). Residues 227-238 (HTPPGPGPPGPC) are compositionally biased toward pro residues. Phosphoserine is present on residues serine 254 and serine 255. Residues 348-430 (LLGNFEESLL…VPKVGTIQVT (83 aa)) form a required for macropage invasion region. The transactivation domain 1 (TAD1) stretch occupies residues 436–444 (QTVVKMFLV).

Belongs to the ATOS family.

It is found in the nucleus. Its function is as follows. Transcription regulator that may syncronize transcriptional and translational programs. This is Atos homolog protein B from Rattus norvegicus (Rat).